The following is a 151-amino-acid chain: Putative pre-16S rRNA nuclease (151 aa).

This sequence belongs to the YqgF nuclease family.

It localises to the cytoplasm. Could be a nuclease involved in processing of the 5'-end of pre-16S rRNA. In Nitrosospira multiformis (strain ATCC 25196 / NCIMB 11849 / C 71), this protein is Putative pre-16S rRNA nuclease.